The sequence spans 561 residues: Mercuric reductase (561 aa).

One can recognise an HMA domain in the interval 1–65; the sequence is MTTLKITGMT…AVAGLGYEAT (65 aa). A metal cation is bound by residues cysteine 11 and cysteine 14. FAD-binding residues include alanine 110, glycine 130, and threonine 135. A disulfide bond links cysteine 136 and cysteine 141. The FAD site is built by lysine 145, alanine 211, aspartate 403, and valine 411. The Hg(2+) site is built by cysteine 558 and cysteine 559.

Belongs to the class-I pyridine nucleotide-disulfide oxidoreductase family. As to quaternary structure, homodimer. The cofactor is FAD.

The enzyme catalyses Hg + NADP(+) + H(+) = Hg(2+) + NADPH. In terms of biological role, resistance to Hg(2+) in bacteria appears to be governed by a specialized system which includes mercuric reductase. MerA protein is responsible for volatilizing mercury as Hg(0). The polypeptide is Mercuric reductase (merA) (Acinetobacter calcoaceticus).